We begin with the raw amino-acid sequence, 318 residues long: Protoheme IX farnesyltransferase (318 aa).

Transmembrane regions (helical) follow at residues 37 to 57, 58 to 78, 100 to 120, 122 to 142, 155 to 175, 182 to 202, 228 to 248, 251 to 271, and 291 to 311; these read LVIF…HPVI, AFTA…LNMW, VTAR…VMTM, VLVN…YLVV, IVIG…AVTG, FVLF…LALY, IMLY…LGFA, LYMG…FGIW, and ILYL…GLGG.

This sequence belongs to the UbiA prenyltransferase family. Protoheme IX farnesyltransferase subfamily.

It is found in the cell inner membrane. It catalyses the reaction heme b + (2E,6E)-farnesyl diphosphate + H2O = Fe(II)-heme o + diphosphate. The protein operates within porphyrin-containing compound metabolism; heme O biosynthesis; heme O from protoheme: step 1/1. Functionally, converts heme B (protoheme IX) to heme O by substitution of the vinyl group on carbon 2 of heme B porphyrin ring with a hydroxyethyl farnesyl side group. The polypeptide is Protoheme IX farnesyltransferase (Parvibaculum lavamentivorans (strain DS-1 / DSM 13023 / NCIMB 13966)).